We begin with the raw amino-acid sequence, 238 residues long: Fibroblast growth factor-binding protein 1 (238 aa).

Positions 1 to 20 (MRIHGLILLSFLLLAAQVLS) are cleaved as a signal peptide. The disordered stretch occupies residues 25–61 (KTAKNVPDSTTEEDMSPSLGKARNKQRSRTSKSMTHG). Intrachain disulfides connect Cys71-Cys88, Cys97-Cys130, and Cys106-Cys142. Ser164 carries an O-linked (GalNAc...) serine glycan. The segment at 197–238 (KDSECLEDPDVLTQRKTALEFCGESWSSFCTFFLNMLQATSC) is sufficient for interaction with FGF2 and FGF2-induced effects. Disulfide bonds link Cys201-Cys238 and Cys218-Cys226.

Belongs to the fibroblast growth factor-binding protein family. Found in a complex with FGFBP1, FGF1 and FGF2. Interacts with FGF1, FGF2, FGF7, FGF10, FGF22 and HSPG2. Expressed in gut, eye, thymus, skin, lung, tongue, Purkinje cells and cerebral chorioid plexus (at protein level).

Its subcellular location is the secreted. It localises to the extracellular space. It is found in the cell membrane. Functionally, acts as a carrier protein that release fibroblast-binding factors (FGFs) from the extracellular matrix (EM) storage and thus enhance the mitogenic activity of FGFs. Enhances FGF2 signaling during tissue repair, angiogenesis and in tumor growth. The chain is Fibroblast growth factor-binding protein 1 (Fgfbp1) from Rattus norvegicus (Rat).